Reading from the N-terminus, the 227-residue chain is Ribose-5-phosphate isomerase A (227 aa).

Substrate is bound by residues 30–33, 86–89, and 99–104; these read TGST, DGAD, and KGMGGA. Glu-108 serves as the catalytic Proton acceptor. Lys-126 is a binding site for substrate.

This sequence belongs to the ribose 5-phosphate isomerase family. As to quaternary structure, homodimer.

The enzyme catalyses aldehydo-D-ribose 5-phosphate = D-ribulose 5-phosphate. It participates in carbohydrate degradation; pentose phosphate pathway; D-ribose 5-phosphate from D-ribulose 5-phosphate (non-oxidative stage): step 1/1. Functionally, involved in the first step of the non-oxidative branch of the pentose phosphate pathway. It catalyzes the reversible conversion of ribose-5-phosphate to ribulose 5-phosphate. Can also act on D-ribose-5-diphosphate and D-ribose-5-triphosphate as substrate. This Thermus thermophilus (strain ATCC BAA-163 / DSM 7039 / HB27) protein is Ribose-5-phosphate isomerase A.